A 441-amino-acid chain; its full sequence is Sec-independent protein translocase protein TatCo (441 aa).

Residues 1-185 (MADEERDAGL…LVGEAPESDQ (185 aa)) are disordered. The segment covering 13-22 (ADDETDASDD) has biased composition (acidic residues). Residues 51–62 (TPRDETVTHGSD) show a composition bias toward basic and acidic residues. Over residues 75 to 104 (DNGDDSDSDTDAAPDDADDSATDSDADSDD) the composition is skewed to acidic residues. Residues 105-117 (EPRLLADDEHTSH) show a composition bias toward basic and acidic residues. Composition is skewed to acidic residues over residues 122 to 138 (TYDDSSDESADDVDPDA) and 164 to 173 (EDADFDDEDV). Helical transmembrane passes span 200–220 (LAVVLGVAGAITLVLFPGADI), 276–296 (VAGLAGTVIGLPVFVYETYLF), 317–337 (LVLALVGVLFAHFVVLPAIFA), 357–377 (FNLILILMGYMAVVFQIPLFV), 395–415 (RLLFWGAFLGLAFLVSPDPTG), and 416–436 (MAPIIIGATMITLFEGTLAAL).

This sequence belongs to the TatC family. Forms a complex with TatA.

The protein resides in the cell membrane. Part of the twin-arginine translocation (Tat) system that transports large folded proteins containing a characteristic twin-arginine motif in their signal peptide across membranes. In Haloferax volcanii (strain ATCC 29605 / DSM 3757 / JCM 8879 / NBRC 14742 / NCIMB 2012 / VKM B-1768 / DS2) (Halobacterium volcanii), this protein is Sec-independent protein translocase protein TatCo.